Reading from the N-terminus, the 364-residue chain is Dihydroorotate dehydrogenase (quinone) (364 aa).

FMN-binding positions include A61 to K65 and T85. K65 contributes to the substrate binding site. N110 to F114 lines the substrate pocket. FMN-binding residues include N139 and N170. N170 lines the substrate pocket. The active-site Nucleophile is S173. N175 provides a ligand contact to substrate. Residues K214 and A242 each coordinate FMN. N243–T244 provides a ligand contact to substrate. Residues G266, G295, and Y316 to S317 each bind FMN.

The protein belongs to the dihydroorotate dehydrogenase family. Type 2 subfamily. Monomer. FMN serves as cofactor.

The protein resides in the cell membrane. It catalyses the reaction (S)-dihydroorotate + a quinone = orotate + a quinol. The protein operates within pyrimidine metabolism; UMP biosynthesis via de novo pathway; orotate from (S)-dihydroorotate (quinone route): step 1/1. Catalyzes the conversion of dihydroorotate to orotate with quinone as electron acceptor. This chain is Dihydroorotate dehydrogenase (quinone), found in Rhodopseudomonas palustris (strain ATCC BAA-98 / CGA009).